Consider the following 59-residue polypeptide: MKVFLLTILLCFLIAYCAGTNIFDPDNNPMCIPQGEKCVMRDFGCCLPYQCDWMKNRCK.

The signal sequence occupies residues 1–19; the sequence is MKVFLLTILLCFLIAYCAG. 3 disulfides stabilise this stretch: cysteine 31/cysteine 46, cysteine 38/cysteine 51, and cysteine 45/cysteine 58.

It belongs to the venom Ptu1-like knottin family. In terms of tissue distribution, expressed by the venom gland.

It is found in the secreted. In terms of biological role, binds reversibly and blocks P/Q-type voltage-gated calcium channels (Cav). The sequence is that of U-reduvitoxin-Pr6a from Platymeris rhadamanthus (Red spot assassin bug).